Reading from the N-terminus, the 238-residue chain is Ribosomal RNA small subunit methyltransferase G (238 aa).

Residues Gly-99, Leu-104, 122 to 124 (DAT), 150 to 151 (VE), and Arg-164 contribute to the S-adenosyl-L-methionine site.

Belongs to the methyltransferase superfamily. RNA methyltransferase RsmG family.

It is found in the cytoplasm. Its function is as follows. Specifically methylates the N7 position of a guanine in 16S rRNA. The sequence is that of Ribosomal RNA small subunit methyltransferase G from Chlorobium luteolum (strain DSM 273 / BCRC 81028 / 2530) (Pelodictyon luteolum).